Consider the following 199-residue polypeptide: Peroxiredoxin-1 (199 aa).

Ser2 bears the N-acetylserine mark. The Thioredoxin domain maps to 6-165; it reads AKIGYPAPNF…IIRLVQAFQF (160 aa). The residue at position 7 (Lys7) is an N6-acetyllysine; alternate. Lys7 is covalently cross-linked (Glycyl lysine isopeptide (Lys-Gly) (interchain with G-Cter in SUMO2); alternate). Residues Lys16 and Lys27 each carry the N6-acetyllysine modification. A Phosphoserine modification is found at Ser32. At Lys35 the chain carries N6-acetyllysine; alternate. Position 35 is an N6-succinyllysine; alternate (Lys35). Catalysis depends on Cys52, which acts as the Cysteine sulfenic acid (-SOH) intermediate. Thr90 is modified (phosphothreonine). A Glycyl lysine isopeptide (Lys-Gly) (interchain with G-Cter in SUMO2) cross-link involves residue Lys120. Lys136 is subject to N6-acetyllysine. A Glycyl lysine isopeptide (Lys-Gly) (interchain with G-Cter in SUMO1) cross-link involves residue Lys185. N6-acetyllysine is present on Lys197.

This sequence belongs to the peroxiredoxin family. AhpC/Prx1 subfamily. Homodimer; disulfide-linked, upon oxidation. 5 homodimers assemble to form a ring-like decamer. Interacts with GDPD5; forms a mixed-disulfide with GDPD5. Interacts with SESN1 and SESN2. Interacts with FAM107A. In terms of processing, phosphorylated on Thr-90 during the M-phase, which leads to a decrease in enzymatic activity. Acetylation increases reducing activity and resistance to superoxidation. Deacetylated by HDAC6 which decreases reducing activity. Found in various tissues; high concentration in liver.

It is found in the cytoplasm. It catalyses the reaction a hydroperoxide + [thioredoxin]-dithiol = an alcohol + [thioredoxin]-disulfide + H2O. Its function is as follows. Thiol-specific peroxidase that catalyzes the reduction of hydrogen peroxide and organic hydroperoxides to water and alcohols, respectively. Plays a role in cell protection against oxidative stress by detoxifying peroxides and as sensor of hydrogen peroxide-mediated signaling events. Might participate in the signaling cascades of growth factors and tumor necrosis factor-alpha by regulating the intracellular concentrations of H(2)O(2). Reduces an intramolecular disulfide bond in GDPD5 that gates the ability to GDPD5 to drive postmitotic motor neuron differentiation. This is Peroxiredoxin-1 (Prdx1) from Mus musculus (Mouse).